The primary structure comprises 54 residues: Large ribosomal subunit protein bL33A (54 aa).

The protein belongs to the bacterial ribosomal protein bL33 family.

This is Large ribosomal subunit protein bL33A from Mycobacterium marinum (strain ATCC BAA-535 / M).